The sequence spans 199 residues: Imidazoleglycerol-phosphate dehydratase (199 aa).

It belongs to the imidazoleglycerol-phosphate dehydratase family.

It is found in the cytoplasm. The enzyme catalyses D-erythro-1-(imidazol-4-yl)glycerol 3-phosphate = 3-(imidazol-4-yl)-2-oxopropyl phosphate + H2O. It functions in the pathway amino-acid biosynthesis; L-histidine biosynthesis; L-histidine from 5-phospho-alpha-D-ribose 1-diphosphate: step 6/9. The polypeptide is Imidazoleglycerol-phosphate dehydratase (Mesorhizobium japonicum (strain LMG 29417 / CECT 9101 / MAFF 303099) (Mesorhizobium loti (strain MAFF 303099))).